The following is a 1371-amino-acid chain: MTGKKLLLIGSGGREHALAWKLQQSKNVTEIFAFPGSIGISQLEKVQLVNNNEMNLKDFKGIASWCKINHIDLVIVGPEDPLAEGIADQLKAANIHCFGPSKAGARIESDKSWSKDFMIRHHIPTAQYGSFIDALKAKDFIRNTPNALVVKASGLAAGKGVIVAENIEEACAAVDEILGDHKFGTAGDVVVVEEKLSGQEVSVLGFVDSNSVRILPPAQDHKRLKDNDEGLNTGGMGAYCPCPLISQQELDIVKSQVLQRAVDGLRKENILYNGILYAGIMLTHDGPKTLEFNCRFGDPETQIILPLLDEDLYDLMMASCTNHLCNVPELKFKSNINAVGVVMASKGYPETSTKGCVISGIESVETMDNHIVFHSGTSKNNKDEWITNGGRVLINIALADNLKKAADLATKACDVVKFDGSQYRRDIGKKAFQIHSLTYKESGVNIEAGNSLVGRIKSLSYGTHRSGVVGQIGSFGGLMRLNDIKYINSNGEESNYKDIVLVQGTDGVGTKLKIAESMNVWDTIGIDLVAMCVNDVLCNGAEPIGFLDYIACGHLEVPTVATIVKGIADGCRKANCALIGGETAEMPSMYGKGKYDLAGYCVGITEYDEILPKINDVHVGDVVIGLPSSGIHSNGFSLVNKIFQQTGFKLTDIAEFSDSHKSYGMEFLTPTRLYVSETLPFLRNGYVKALAHITGGGLLENIPRILPNHLSVQIDALTWKLPKVFSWLAAHGNVNANEMLRTFNCGIGMIIIMPRNDIEWETIPEARMIGSITQRDHNGPQVIVKNFKEVLHKEVTHWKKGDAETTSISYKDSGVDITAGNELVDNIKPHAKSTNRKGVIGGLGSFGGLFRINECGTKFEDPMLVLATDGVGTKLKIAQQLGKHDTVGIDLVAMCNNDILCNGAEPLTFLDYFACGKLDVNVATNVVSGIAEGCRQSDSTLLGGETAEMPGMYNPNVYDLAGFSLGVAEHEDILPKKNCLEVGDIIIGFPSNGVHSNGFSLIHKLFELTGYKWTDIAPFSAYGKTFGEEFLEPTKVYVKEISPALKTGYVKALAHITGGGLWDNIPRVLPYNLTAELDAKKINISPVFAWLSLNGNIDKLELLKTFNCGIGMIMIASKEHELEILKSLYGSRASVIGKIIPTKPHGHQVIVRHFATCFERVERLLSIPKKRVGVLISGSGSNLQALIDATKSTNMGMCSEIVFVLSNKAGIFGLERAAKANIPSTVISNKDYATREAFDVALHNELIKHNVEIICLAGFMRILTPCFVNKWKGKLLNIHPSLLPKYKGITAQKDALESGDNESGCTVHFVDENVDTGAIIVQEIVPIFENDTVESLTERIHVAEHIAFPKALRLVASGYVRLNDKCETEWA.

Residues 115 to 321 (KDFMIRHHIP…LYDLMMASCT (207 aa)) enclose the ATP-grasp domain. ATP contacts are provided by residues 193–196 (EEKL), glutamate 200, arginine 223, and asparagine 232. Residues glutamate 291 and asparagine 293 each coordinate Mg(2+). Positions 434–1171 (IHSLTYKESG…ERLLSIPKKR (738 aa)) are AIRS domain. The tract at residues 1169–1369 (KKRVGVLISG…VRLNDKCETE (201 aa)) is GART domain. 1180 to 1182 (GSN) is a binding site for N(1)-(5-phospho-beta-D-ribosyl)glycinamide. (6R)-10-formyltetrahydrofolate contacts are provided by residues arginine 1235, 1260-1263 (MRIL), and asparagine 1277. Histidine 1279 (proton donor) is an active-site residue. 1311-1315 (DENVD) lines the (6R)-10-formyltetrahydrofolate pocket. N(1)-(5-phospho-beta-D-ribosyl)glycinamide is bound at residue 1341–1344 (HVAE).

It in the N-terminal section; belongs to the GARS family. This sequence in the central section; belongs to the AIR synthase family. The protein in the C-terminal section; belongs to the GART family. In terms of assembly, homodimer. Requires Mg(2+) as cofactor. The cofactor is Mn(2+).

It catalyses the reaction 5-phospho-beta-D-ribosylamine + glycine + ATP = N(1)-(5-phospho-beta-D-ribosyl)glycinamide + ADP + phosphate + H(+). The catalysed reaction is 2-formamido-N(1)-(5-O-phospho-beta-D-ribosyl)acetamidine + ATP = 5-amino-1-(5-phospho-beta-D-ribosyl)imidazole + ADP + phosphate + H(+). The enzyme catalyses N(1)-(5-phospho-beta-D-ribosyl)glycinamide + (6R)-10-formyltetrahydrofolate = N(2)-formyl-N(1)-(5-phospho-beta-D-ribosyl)glycinamide + (6S)-5,6,7,8-tetrahydrofolate + H(+). Its pathway is purine metabolism; IMP biosynthesis via de novo pathway; 5-amino-1-(5-phospho-D-ribosyl)imidazole from N(2)-formyl-N(1)-(5-phospho-D-ribosyl)glycinamide: step 2/2. The protein operates within purine metabolism; IMP biosynthesis via de novo pathway; N(1)-(5-phospho-D-ribosyl)glycinamide from 5-phospho-alpha-D-ribose 1-diphosphate: step 2/2. It functions in the pathway purine metabolism; IMP biosynthesis via de novo pathway; N(2)-formyl-N(1)-(5-phospho-D-ribosyl)glycinamide from N(1)-(5-phospho-D-ribosyl)glycinamide (10-formyl THF route): step 1/1. Functionally, trifunctional enzyme that catalyzes three distinct reactions as part of the 'de novo' inosine monophosphate biosynthetic pathway. This is Trifunctional purine biosynthetic protein adenosine-3 (GART) from Chironomus tentans (Midge).